We begin with the raw amino-acid sequence, 429 residues long: Phosphoribosylamine--glycine ligase (429 aa).

An ATP-grasp domain is found at 109 to 316 (KDFLARHNIP…LVELCLAACE (208 aa)). 135–196 (LREKGAPIVI…EEFLDGEEAS (62 aa)) is an ATP binding site. Positions 212–237 (SQDHKRVGDKDTGPNTGGMGAYSPAP) are disordered. A compositionally biased stretch (basic and acidic residues) spans 213 to 223 (QDHKRVGDKDT). Mg(2+)-binding residues include Glu-286 and Asn-288.

This sequence belongs to the GARS family. In terms of assembly, monomer. The cofactor is Mg(2+). It depends on Mn(2+) as a cofactor.

The enzyme catalyses 5-phospho-beta-D-ribosylamine + glycine + ATP = N(1)-(5-phospho-beta-D-ribosyl)glycinamide + ADP + phosphate + H(+). It participates in purine metabolism; IMP biosynthesis via de novo pathway; N(1)-(5-phospho-D-ribosyl)glycinamide from 5-phospho-alpha-D-ribose 1-diphosphate: step 2/2. The protein is Phosphoribosylamine--glycine ligase of Escherichia coli O157:H7.